Consider the following 397-residue polypeptide: Probable tRNA sulfurtransferase (397 aa).

Positions 60–165 (HPVIEKLQEV…KEGTYITAYD (106 aa)) constitute a THUMP domain. Residues 183 to 184 (ML), 208 to 209 (HF), Arg265, Gly287, and Gln296 contribute to the ATP site.

It belongs to the ThiI family.

It is found in the cytoplasm. It carries out the reaction [ThiI sulfur-carrier protein]-S-sulfanyl-L-cysteine + a uridine in tRNA + 2 reduced [2Fe-2S]-[ferredoxin] + ATP + H(+) = [ThiI sulfur-carrier protein]-L-cysteine + a 4-thiouridine in tRNA + 2 oxidized [2Fe-2S]-[ferredoxin] + AMP + diphosphate. The enzyme catalyses [ThiS sulfur-carrier protein]-C-terminal Gly-Gly-AMP + S-sulfanyl-L-cysteinyl-[cysteine desulfurase] + AH2 = [ThiS sulfur-carrier protein]-C-terminal-Gly-aminoethanethioate + L-cysteinyl-[cysteine desulfurase] + A + AMP + 2 H(+). It participates in cofactor biosynthesis; thiamine diphosphate biosynthesis. In terms of biological role, catalyzes the ATP-dependent transfer of a sulfur to tRNA to produce 4-thiouridine in position 8 of tRNAs, which functions as a near-UV photosensor. Also catalyzes the transfer of sulfur to the sulfur carrier protein ThiS, forming ThiS-thiocarboxylate. This is a step in the synthesis of thiazole, in the thiamine biosynthesis pathway. The sulfur is donated as persulfide by IscS. In Anoxybacillus flavithermus (strain DSM 21510 / WK1), this protein is Probable tRNA sulfurtransferase.